A 270-amino-acid chain; its full sequence is Transcription factor PU.1 (270 aa).

A disordered region spans residues 123–164; sequence SLSPAQPSSDEEEGERQSPPLEVSDGEADGLEPGPGLLPGET. 2 positions are modified to phosphoserine: Ser-140 and Ser-146. Positions 153–164 are enriched in low complexity; the sequence is LEPGPGLLPGET. Positions 170–253 form a DNA-binding region, ETS; the sequence is IRLYQFLLDL…VKKKLTYQFS (84 aa). Positions 217, 230, 233, and 243 each coordinate DNA.

The protein belongs to the ETS family. In terms of assembly, binds DNA as a monomer. Can form homomers. Directly interacts with CEBPD/NF-IL6-beta; this interaction does not affect DNA-binding properties of each partner. Interacts with NONO/p54(nrb). Interacts with RUNX1/AML1. Interacts with GFI1; the interaction represses SPI1 transcriptional activity, hence blocks SPI1-induced macrophage differentiation of myeloid progenitor cells. Interacts with CEBPE. Interacts with IRF4/Pip and IRF8. Interacts with JUN. Interacts with RB1. Interacts with TBP. As to expression, in the bone marrow, concentrated in hematopoietic stem cell, lymphoid progenitor, myeloid lineage (granulocyte macrophage progenitors, classical dendritic cells, monocytes) and B-cell clusters. Among B-cells, predominantly expressed in pre-B1 cells. Expressed in germinal center B-cells.

It is found in the nucleus. Its activity is regulated as follows. Transcriptional activity at macrophage-specific genes is inhibited by interaction with GFI1, which results in the inhibition of SPI1-induced macrophage differentiation of myeloid progenitor cells, but not that of the granulocyte lineage. In terms of biological role, pioneer transcription factor, which controls hematopoietic cell fate by decompacting stem cell heterochromatin and allowing other transcription factors to enter otherwise inaccessible genomic sites. Once in open chromatin, can directly control gene expression by binding genetic regulatory elements and can also more broadly influence transcription by recruiting transcription factors, such as interferon regulatory factors (IRFs), to otherwise inaccessible genomic regions. Transcriptionally activates genes important for myeloid and lymphoid lineages, such as CSF1R. Transcriptional activation from certain promoters, possibly containing low affinity binding sites, is achieved cooperatively with other transcription factors. FCER1A transactivation is achieved in cooperation with GATA1. May be particularly important for the pro- to pre-B cell transition. Binds (via the ETS domain) onto the purine-rich DNA core sequence 5'-GAGGAA-3', also known as the PU-box. In vitro can bind RNA and interfere with pre-mRNA splicing. This Homo sapiens (Human) protein is Transcription factor PU.1 (SPI1).